The primary structure comprises 2072 residues: Protein still life, isoform SIF type 1 (2072 aa).

G2 carries N-myristoyl glycine lipidation. In terms of domain architecture, WH1 spans 29 to 147 (RRDGHLLSSF…ECCSPSFKFS (119 aa)). Disordered regions lie at residues 153–188 (SYSL…EPQC), 245–284 (DNVA…NTNT), 327–355 (EGTQ…RNKD), 459–486 (NNTM…RGYP), 502–576 (EGSP…SPTS), 618–655 (AKSS…ELIR), and 699–747 (SGSS…YKSA). Residues 275-284 (VANSGVNTNT) show a composition bias toward polar residues. Low complexity-rich tracts occupy residues 338 to 351 (SVGT…GTGT), 459 to 476 (NNTM…SGSR), and 522 to 553 (SSSN…PPQR). A compositionally biased stretch (polar residues) spans 564-576 (APNVTPTPGSPTS). Residues 634–655 (IRDKERDRDRDGYYSDRNELIR) show a composition bias toward basic and acidic residues. Residues 732–743 (SLRQDSSLNDSG) are compositionally biased toward polar residues. In terms of domain architecture, PH spans 840-958 (TGAVRKAGFL…SIHSACAAAF (119 aa)). Residues 1088–1119 (GRGATKRRPPMLSRSNSGSSRRSMQMNSRDEP) are disordered. Over residues 1100–1114 (SRSNSGSSRRSMQMN) the composition is skewed to low complexity. The RBD domain occupies 1121-1188 (KTFKVAMPDN…PHRNDLIENY (68 aa)). Positions 1204 to 1293 (QVELQRTTLE…LSMMMRSSRT (90 aa)) constitute a PDZ domain. Positions 1403 to 1424 (AEQETRKSSPTGSVTSSVSTTA) are disordered. Positions 1410–1424 (SSPTGSVTSSVSTTA) are enriched in low complexity. A DH domain is found at 1436 to 1630 (KLRKVVMELV…EKVAEHINEM (195 aa)). Disordered regions lie at residues 1803–1832 (MKNF…NSQT), 1844–2039 (HGSH…YQPV), and 2051–2072 (PRDM…DVKN). Low complexity-rich tracts occupy residues 1811–1821 (GSVSGHSSQGM) and 1926–1943 (QQQQ…QQGH). Residues 1970 to 1984 (HSSDIERIDPGTKSE) are compositionally biased toward basic and acidic residues. Positions 2007–2022 (LTLSTTSTLSVGSTGS) are enriched in low complexity. The segment covering 2023–2032 (QARLIQSSHP) has biased composition (polar residues).

In terms of tissue distribution, expressed in both larval and adult brains, mainly in a subset of neurons but not in glia. In the adult eye is expressed in the two primary pigment cells in the subapical region of the eye. Also present in photoreceptors.

Its subcellular location is the synapse. Regulates synaptic differentiation through the organization of actin cytoskeleton possibly by activating Rho-like GTPases. Is likely a factor in the cascade of Rac1 or Cdc42 in the neurons. May play a role in maintaining proper septate junction functions. Required for eye development and most likely affects corneal lens-formation. The chain is Protein still life, isoform SIF type 1 (sif) from Drosophila melanogaster (Fruit fly).